Reading from the N-terminus, the 265-residue chain is Hydroxyethylthiazole kinase (265 aa).

Position 50 (M50) interacts with substrate. R125 and T171 together coordinate ATP. A substrate-binding site is contributed by G198.

It belongs to the Thz kinase family. Mg(2+) is required as a cofactor.

The enzyme catalyses 5-(2-hydroxyethyl)-4-methylthiazole + ATP = 4-methyl-5-(2-phosphooxyethyl)-thiazole + ADP + H(+). Its pathway is cofactor biosynthesis; thiamine diphosphate biosynthesis; 4-methyl-5-(2-phosphoethyl)-thiazole from 5-(2-hydroxyethyl)-4-methylthiazole: step 1/1. Catalyzes the phosphorylation of the hydroxyl group of 4-methyl-5-beta-hydroxyethylthiazole (THZ). This is Hydroxyethylthiazole kinase from Salmonella newport (strain SL254).